Here is a 216-residue protein sequence, read N- to C-terminus: Somatotropin (216 aa).

Positions 1–26 (MAAGPRTSMLLAFALLCLPWTQEVGA) are cleaved as a signal peptide. Position 45 (His45) interacts with Zn(2+). Cys78 and Cys189 are disulfide-bonded. At Ser131 the chain carries Phosphoserine. Residue Glu198 participates in Zn(2+) binding. A disulfide bond links Cys206 and Cys214.

This sequence belongs to the somatotropin/prolactin family.

Its subcellular location is the secreted. Its function is as follows. Plays an important role in growth control. Its major role in stimulating body growth is to stimulate the liver and other tissues to secrete IGF1. It stimulates both the differentiation and proliferation of myoblasts. It also stimulates amino acid uptake and protein synthesis in muscle and other tissues. This is Somatotropin (GH1) from Delphinus delphis (Short-beaked common dolphin).